Consider the following 151-residue polypeptide: Mediator of RNA polymerase II transcription subunit 32 (151 aa).

The disordered stretch occupies residues 128–151 (GVAPGSVHSSSTGFDSRFSEDSTQ).

The protein belongs to the mediator complex subunit 32 family. In terms of assembly, oligomers. Component of the Mediator complex. Interacts with MED6. Interacts with GEBPL.

The protein resides in the nucleus. Functionally, component of the Mediator complex, a coactivator involved in the regulated transcription of nearly all RNA polymerase II-dependent genes. Mediator functions as a bridge to convey information from gene-specific regulatory proteins to the basal RNA polymerase II transcription machinery. The Mediator complex, having a compact conformation in its free form, is recruited to promoters by direct interactions with regulatory proteins and serves for the assembly of a functional pre-initiation complex with RNA polymerase II and the general transcription factors. The protein is Mediator of RNA polymerase II transcription subunit 32 (MED32) of Arabidopsis thaliana (Mouse-ear cress).